Reading from the N-terminus, the 585-residue chain is Amyloid protein-binding protein 2 (585 aa).

8 TPR repeats span residues 50-83 (QGRL…HHCF), 120-153 (IQVG…CTLH), 206-239 (AALY…ITSG), 288-321 (SDTL…RQSV), 333-367 (HEDL…ITHI), 429-462 (AKHY…KEQL), 471-505 (ALSV…GKKL), and 514-547 (EYDY…NRLR).

As to quaternary structure, component of a CRL2 E3 ubiquitin-protein ligase complex, also named ECS (Elongin BC-CUL2/5-SOCS-box protein) complex, composed of CUL2, Elongin BC (ELOB and ELOC), RBX1 and substrate-specific adapter APPBP2. Interacts with APP; APP interaction inhibits the E3 ubiquitin-protein ligase activity of the CRL2(APPBP2) complex. Post-translationally, rapidly degraded by the proteasome upon overexpression of a C-terminal fragment of APP.

It localises to the nucleus. Its subcellular location is the cytoplasm. The protein localises to the cytoskeleton. It is found in the membrane. It participates in protein modification; protein ubiquitination. With respect to regulation, E3 ubiquitin-protein ligase activity of the CRL2(APPBP2) complex is inhibited by APP. In terms of biological role, substrate-recognition component of a Cul2-RING (CRL2) E3 ubiquitin-protein ligase complex of the DesCEND (destruction via C-end degrons) pathway, which recognizes a C-degron located at the extreme C terminus of target proteins, leading to their ubiquitination and degradation. The C-degron recognized by the DesCEND pathway is usually a motif of less than ten residues and can be present in full-length proteins, truncated proteins or proteolytically cleaved forms. The CRL2(APPBP2) complex specifically recognizes proteins with a -Arg-Xaa-Xaa-Gly degron at the C-terminus, leading to their ubiquitination and degradation. The CRL2(APPBP2) complex mediates ubiquitination and degradation of truncated SELENOV selenoproteins produced by failed UGA/Sec decoding, which end with a -Arg-Xaa-Xaa-Gly degron. May play a role in intracellular protein transport: may be involved in the translocation of APP along microtubules toward the cell surface. The protein is Amyloid protein-binding protein 2 of Rattus norvegicus (Rat).